A 328-amino-acid chain; its full sequence is Interferon regulatory factor 1 (328 aa).

The IRF tryptophan pentad repeat DNA-binding region spans 5–113; it reads RMRMRPWLEM…SAVRVYRMLP (109 aa). The residue at position 78 (lysine 78) is an N6-acetyllysine. Residues 92 to 164 are disordered; that stretch reads EEVKDQSRNK…STLPDDHSSY (73 aa). The span at 141 to 157 shows a compositional bias: low complexity; sequence GDSSPDTLSDGLSSSTL. Residues lysine 276 and lysine 300 each participate in a glycyl lysine isopeptide (Lys-Gly) (interchain with G-Cter in SUMO) cross-link.

The protein belongs to the IRF family. As to quaternary structure, monomer. Homodimer. Interacts with EP300. Interacts with MYD88. Interacts with PIAS3. Interacts with SPOP. Post-translationally, phosphorylated by CK2 and this positively regulates its activity. Sumoylation represses the transcriptional activity and displays enhanced resistance to protein degradation. Sumoylated by UBE2I/UBC9 and SUMO1. Inactivates the tumor suppressor activity. Elevated levels in tumor cells. Major site is Lys-276. Sumoylation is enhanced by PIAS3. Desumoylated by SENP1 in tumor cells and appears to compete with ubiquitination on C-terminal sites. In terms of processing, ubiquitinated in a SPOP-depedent manner. Appears to compete with sumoylation on C-terminal sites.

Its subcellular location is the nucleus. The protein localises to the cytoplasm. With respect to regulation, activated by MYD88. In terms of biological role, transcriptional regulator which displays a remarkable functional diversity in the regulation of cellular responses. Regulates transcription of IFN and IFN-inducible genes, host response to viral and bacterial infections, regulation of many genes expressed during hematopoiesis, inflammation, immune responses and cell proliferation and differentiation, regulation of the cell cycle and induction of growth arrest and programmed cell death following DNA damage. Stimulates both innate and acquired immune responses through the activation of specific target genes and can act as a transcriptional activator and repressor regulating target genes by binding to an interferon-stimulated response element (ISRE) in their promoters. Has an essentail role in IFNG-dependent immunity to mycobacteria. Binds to a consensus sequence in gene promoters. Its target genes for transcriptional activation activity include: genes involved in anti-viral response, such as IFN-alpha/beta, RIGI, TNFSF10/TRAIL, ZBP1, OAS1/2, PIAS1/GBP, EIF2AK2/PKR and RSAD2/viperin; antibacterial response, such as GBP2, GBP5 and NOS2/INOS; anti-proliferative response, such as p53/TP53, LOX and CDKN1A; apoptosis, such as BBC3/PUMA, CASP1, CASP7 and CASP8; immune response, such as IL7, IL12A/B and IL15, PTGS2/COX2 and CYBB; DNA damage responses and DNA repair, such as POLQ/POLH; MHC class I expression, such as TAP1, PSMB9/LMP2, PSME1/PA28A, PSME2/PA28B and B2M and MHC class II expression, such as CIITA; metabolic enzymes, such as ACOD1/IRG1. Represses genes involved in anti-proliferative response, such as BIRC5/survivin, CCNB1, CCNE1, CDK1, CDK2 and CDK4 and in immune response, such as FOXP3, IL4, ANXA2 and TLR4. Stimulates p53/TP53-dependent transcription through enhanced recruitment of EP300 leading to increased acetylation of p53/TP53. Plays an important role in immune response directly affecting NK maturation and activity, macrophage production of IL12, Th1 development and maturation of CD8+ T-cells. Also implicated in the differentiation and maturation of dendritic cells and in the suppression of regulatory T (Treg) cells development. Acts as a tumor suppressor and plays a role not only in antagonism of tumor cell growth but also in stimulating an immune response against tumor cells. This is Interferon regulatory factor 1 (Irf1) from Rattus norvegicus (Rat).